Here is a 1052-residue protein sequence, read N- to C-terminus: CCAAT/enhancer-binding protein zeta (1052 aa).

Disordered regions lie at residues 1 to 40, 122 to 158, and 621 to 677; these read MSAD…KNGF, VENK…VSKA, and SQLD…AEKP. Over residues 23–34 the composition is skewed to acidic residues; sequence EDPDEEDEEDGD. A compositionally biased stretch (basic and acidic residues) spans 122–150; it reads VENKKQKATEGKKTSEKKVKNKTVAEQRP. Over residues 627–643 the composition is skewed to acidic residues; sequence PESDEENFVDVGDDSDD. A phosphoserine mark is found at serine 629 and serine 641. The span at 644-677 shows a compositional bias: basic and acidic residues; that stretch reads EKFTDADKGTATDAVKEVESKETEPESSAEAEKP. Serine 837 is subject to Phosphoserine. Residues 876-969 are disordered; the sequence is KGAKADLEDS…QGQKKKKKSF (94 aa). Over residues 883–932 the composition is skewed to acidic residues; it reads EDSESSDGELGDLDDDEVSLGSMNDEDFEIDEDGGTFMDVSDDESEDAPE. 3 positions are modified to phosphoserine: serine 958, serine 972, and serine 977. The segment at 1032–1052 is disordered; the sequence is KKKKNFRKKMKAPQKPKRQRK.

This sequence belongs to the CBF/MAK21 family. In terms of tissue distribution, ubiquitous.

The protein localises to the nucleus. Its function is as follows. Stimulates transcription from the HSP70 promoter. This is CCAAT/enhancer-binding protein zeta (Cebpz) from Mus musculus (Mouse).